The sequence spans 281 residues: MSAQESCLSLIKYFLFVFNLFFFVLGSLIFCFGIWILIDKTSFVSFVGLAFVPLQIWSKVLAISGIFTMGIALLGCVGALKELRCLLGLYFGMLLLLFATQITLGILISTQRAQLERSLRDVVEKTIQKYGTNPEETAAEESWDYVQFQLRCCGWHYPQDWFQVLILRGNGSEAHRVPCSCYNLSATNDSTILDKVILPQLSRLGHLARSRHSADICAVPAESHIYREGCAQGLQKWLHNNLISIVGICLGVGLLELGFMTLSIFLCRNLDHVYNRLARYR.

The Cytoplasmic portion of the chain corresponds to 1–17 (MSAQESCLSLIKYFLFV). Residues 18-38 (FNLFFFVLGSLIFCFGIWILI) form a helical membrane-spanning segment. At 39-59 (DKTSFVSFVGLAFVPLQIWSK) the chain is on the extracellular side. Residues 60–74 (VLAISGIFTMGIALL) traverse the membrane as a helical segment. At 75–85 (GCVGALKELRC) the chain is on the cytoplasmic side. The helical transmembrane segment at 86–111 (LLGLYFGMLLLLFATQITLGILISTQ) threads the bilayer. Over 112–241 (RAQLERSLRD…QGLQKWLHNN (130 aa)) the chain is Extracellular. 3 N-linked (GlcNAc...) asparagine glycosylation sites follow: asparagine 170, asparagine 183, and asparagine 188. The chain crosses the membrane as a helical span at residues 242-266 (LISIVGICLGVGLLELGFMTLSIFL). At 267-281 (CRNLDHVYNRLARYR) the chain is on the cytoplasmic side.

Belongs to the tetraspanin (TM4SF) family. In terms of assembly, interacts with SCIMP. Interacts with SOCS3. Interacts with DECTIN1/CLEC7A. In terms of processing, tyrosine phosphorylated; leading to activation of downstream signaling pathways. B-lymphocytes. Antigen presenting cells.

The protein resides in the cell membrane. In terms of biological role, structural component of specialized membrane microdomains known as tetraspanin-enriched microdomains (TERMs), which act as platforms for receptor clustering and signaling. Participates thereby in diverse biological functions such as cell signal transduction, adhesion, migration and protein trafficking. Upon ligand binding, two signaling pathways are activated, one acting through phosphorylation by LYN leading to cell death or a survival pathway with activation of GSK3B. Plays an essential role essential for clustering of integrin ITGA4/ITGB1 and promotes its mobility in the plasma membrane of B-cells. In turn, participates in ITGA4/ITGB1 integrin-mediated antiapoptotic signaling through AKT. Also plays a role in the migration of dendritic cells and neutrophils to draining lymph nodes, as well as in their integrin-mediated adhesion. Negatively regulates IL-6 responses through direct interaction with SOCS3 thereby preventing constitutive IL-6 signaling. Alternatively, inhibition of IL-6 signaling can also occur via interaction and stabilization of DECTIN1/CLEC7A at the cell membrane to inhibit its ability to promote the production of IL-6. The protein is Leukocyte antigen CD37 (CD37) of Homo sapiens (Human).